The sequence spans 445 residues: Probable D-serine dehydratase (445 aa).

The residue at position 111 (Lys-111) is an N6-(pyridoxal phosphate)lysine.

Belongs to the serine/threonine dehydratase family. DsdA subfamily. Requires pyridoxal 5'-phosphate as cofactor.

The enzyme catalyses D-serine = pyruvate + NH4(+). In Burkholderia pseudomallei (strain 1710b), this protein is Probable D-serine dehydratase.